The sequence spans 46 residues: Protein PsbN (46 aa).

Residues 10–30 (VSIAVLTALLGLTGFGIYTAF) traverse the membrane as a helical segment.

It belongs to the PsbN family.

The protein localises to the cellular thylakoid membrane. In terms of biological role, may play a role in photosystem I and II biogenesis. This chain is Protein PsbN, found in Synechococcus sp. (strain RCC307).